We begin with the raw amino-acid sequence, 479 residues long: MSFLPVIMAGGTGSRLWPLSREYHPKQFLSVEGKLSMLQNTIKRLASLSTEEPVVICNDRHRFLVAEQLREIDKLANNIILEPVGRNTAPAIALAAFCALQNADNADPLLLVLAADHVIQDEIAFTKAVRHAEEYAANGKLVTFGIVPTHAETGYGYIRRGELIGNDAYAVAEFVEKPDIDTAGDYFKSGKYYWNSGMFLFRASSYLNELKYLSPEIYKACEKAVGHINPDLDFIRIDKEEFMSCPSDSIDYAVMEHTQHAVVIPMSAGWSDVGSWSSLWDISNKDHQRNVLKGDIFAHACNDNYIYSEDMFISAIGVSNLVIVQTTDALLVANKDTVQDVKKIVDYLKRNDRNEYKQHQEVFRPWGKYNVIDSGKNYLVRCITVKPGEKFVAQMHHHRAEHWIVLSGTARVTKGEQTYMVSENESTFIPPNTIHALENPGMTPLKLIEIQSGTYLGEDDIIRLEQRSGFSKEWTNERS.

Belongs to the mannose-6-phosphate isomerase type 2 family. Homodimer.

It catalyses the reaction alpha-D-mannose 1-phosphate + GTP + H(+) = GDP-alpha-D-mannose + diphosphate. It participates in nucleotide-sugar biosynthesis; GDP-alpha-D-mannose biosynthesis; GDP-alpha-D-mannose from alpha-D-mannose 1-phosphate (GTP route): step 1/1. It functions in the pathway bacterial outer membrane biogenesis; LPS O-antigen biosynthesis. Involved in GDP-mannose biosynthesis which serves as the activated sugar nucleotide precursor for mannose residues in cell surface polysaccharides. This enzyme participates in synthesis of the LPS group B O antigen. The polypeptide is Mannose-1-phosphate guanylyltransferase RfbM (rfbM) (Salmonella typhimurium (strain LT2 / SGSC1412 / ATCC 700720)).